The following is a 65-amino-acid chain: U12-theraphotoxin-Cg1a (65 aa).

An N-terminal signal peptide occupies residues 1–21 (MKTSVLLFMLGLTFLFDGLAA). Positions 22–29 (INLQEGER) are excised as a propeptide. Disulfide bonds link Cys-31–Cys-45, Cys-38–Cys-50, and Cys-44–Cys-57.

The protein belongs to the neurotoxin 10 (Hwtx-1) family. 31 (Jztx-15) subfamily. In terms of tissue distribution, expressed by the venom gland.

Its subcellular location is the secreted. Its function is as follows. Probable ion channel inhibitor. This Chilobrachys guangxiensis (Chinese earth tiger tarantula) protein is U12-theraphotoxin-Cg1a.